The chain runs to 602 residues: Zinc finger protein 652-B (602 aa).

Positions 60-232 (FQDSKPTNEV…PSDKAKSEEK (173 aa)) are disordered. The span at 65–79 (PTNEVHAVKGERENS) shows a compositional bias: basic and acidic residues. Acidic residues-rich tracts occupy residues 80-108 (GESE…DEDE) and 148-167 (DDEG…DEEN). Positions 222–232 (SPSDKAKSEEK) are enriched in basic and acidic residues. The C2H2-type 1 zinc finger occupies 235–258 (LTCDKCPRVFNTRWYLEKHMNVTH). Residues 262–284 (QICDKCGKKFVLESELSLHLQTD) form a C2H2-type 2; degenerate zinc finger. 6 consecutive C2H2-type zinc fingers follow at residues 289-312 (IQCI…KIVH), 319-341 (FSCE…LVAH), 347-369 (FTCE…SLQH), 375-397 (FRCE…MSIH), 403-425 (FMCQ…MKTH), and 431-453 (FICE…RRTH). A C2H2-type 9; degenerate zinc finger spans residues 459–482 (YPCDVCGMRFRFSNMLKAHKEKCF). The interval 543–575 (PFSHLHLHPHSHTHHLAVPPVPHLPPPPALFKS) is disordered. The span at 545-557 (SHLHLHPHSHTHH) shows a compositional bias: basic residues. A compositionally biased stretch (pro residues) spans 561–571 (PPVPHLPPPPA).

It belongs to the krueppel C2H2-type zinc-finger protein family.

It localises to the nucleus. Functionally, may be involved in transcriptional regulation. The polypeptide is Zinc finger protein 652-B (znf652-b) (Xenopus laevis (African clawed frog)).